A 2177-amino-acid polypeptide reads, in one-letter code: Protein sidekick-2 (2177 aa).

A signal peptide spans 1 to 26 (MKGLGVPAAALLWGGLSALLPPSLPA). The Extracellular segment spans residues 27–1937 (DDVSPYFKTE…ANPFYEEWWF (1911 aa)). 6 Ig-like C2-type domains span residues 31–113 (PYFK…TEVQ), 118–205 (GSFE…QPIT), 220–299 (PTII…SSVP), 313–401 (PQFV…TYLA), 407–496 (PNIT…ADLV), and 501–590 (TRIT…AHLR). The cysteines at positions 53 and 96 are disulfide-linked. N-linked (GlcNAc...) asparagine glycans are attached at residues Asn-198 and Asn-228. 2 cysteine pairs are disulfide-bonded: Cys-242–Cys-289 and Cys-335–Cys-385. Asn-408 carries an N-linked (GlcNAc...) asparagine glycan. 2 disulfides stabilise this stretch: Cys-428–Cys-480 and Cys-522–Cys-574. Residues Asn-582, Asn-614, Asn-709, Asn-748, Asn-809, Asn-941, and Asn-953 are each glycosylated (N-linked (GlcNAc...) asparagine). Fibronectin type-III domains follow at residues 597-693 (APES…LPEE), 698-794 (PPQN…TLQG), 799-898 (PPGN…THED), 902-996 (PVGH…VPPE), 1000-1099 (APTN…TLQA), 1104-1202 (APAN…TRES), 1207-1304 (GPSN…TLDD), 1305-1402 (VPGP…TEKR), 1407-1504 (PPSK…TLQA), 1509-1626 (APTI…VGEA), 1631-1727 (APQN…TQQA), 1731-1826 (APGS…TGPG), and 1829-1928 (APGP…AQKA). N-linked (GlcNAc...) asparagine glycosylation is found at Asn-1107, Asn-1210, Asn-1261, Asn-1346, Asn-1462, Asn-1580, Asn-1593, Asn-1675, Asn-1694, Asn-1746, and Asn-1820. The helical transmembrane segment at 1938–1958 (LVVIALVGLIFILLLVFVLII) threads the bilayer. The Cytoplasmic segment spans residues 1959–2177 (RGQSKKYAKK…APIGGFSSFV (219 aa)). 2 disordered regions span residues 2044-2071 (AESS…VDPA) and 2103-2177 (QAYS…SSFV). 2 stretches are compositionally biased toward polar residues: residues 2045-2063 (ESSS…QGSD) and 2119-2130 (PLSNSTSTQQGS). The span at 2142–2151 (PQTPGNPPSQ) shows a compositional bias: pro residues. Residues 2171 to 2177 (GGFSSFV) carry the PDZ-binding motif.

Belongs to the sidekick family. As to quaternary structure, homodimer; mediates homophilic interactions to promote cell adhesion. In terms of tissue distribution, expressed by non-overlapping subsets of retinal neurons. SDK1, SDK2, DSCAM and DSCAML1 are expressed in non-overlapping subsets of interneurons and retinal ganglion cells (RGCs) that form synapses in distinct inner plexiform layer (IPL) sublaminae.

It is found in the cell membrane. Its subcellular location is the synapse. In terms of biological role, adhesion molecule that promotes lamina-specific synaptic connections in the retina. Expressed in specific subsets of interneurons and retinal ganglion cells (RGCs) and promotes synaptic connectivity via homophilic interactions. The polypeptide is Protein sidekick-2 (Gallus gallus (Chicken)).